A 242-amino-acid polypeptide reads, in one-letter code: MSNETPQQPTPANELLEALGTTLSPDLLVQALTHRSFSHEHPGVANYERLEFLGDAVLELVSTETLFTIHPDMTEGQLAKMRAKAVSEDALSAIAKTKLKVGPYILLGHGEAEQGGAEKNSILCDIVESLIGATFLEHGIDEARKVIHRLIDDTLAEVATEGPALDWKTSLTVKAHGLGKEEPVYHMEVSGPEYAQIFTARVSLGENGDIIGIGKGSSKRKAQLAAAEAGWKSLDSFKTRTK.

The region spanning 12 to 139 (ANELLEALGT…LIGATFLEHG (128 aa)) is the RNase III domain. Glutamate 51 is a Mg(2+) binding site. Aspartate 55 is a catalytic residue. The Mg(2+) site is built by aspartate 125 and glutamate 128. Residue glutamate 128 is part of the active site. Residues 165–236 (LDWKTSLTVK…AEAGWKSLDS (72 aa)) enclose the DRBM domain.

Belongs to the ribonuclease III family. Homodimer. It depends on Mg(2+) as a cofactor.

It localises to the cytoplasm. The enzyme catalyses Endonucleolytic cleavage to 5'-phosphomonoester.. Its function is as follows. Digests double-stranded RNA. Involved in the processing of primary rRNA transcript to yield the immediate precursors to the large and small rRNAs (23S and 16S). Processes some mRNAs, and tRNAs when they are encoded in the rRNA operon. Processes pre-crRNA and tracrRNA of type II CRISPR loci if present in the organism. This is Ribonuclease 3 from Bifidobacterium longum (strain NCC 2705).